A 133-amino-acid polypeptide reads, in one-letter code: Ribosome-binding factor A (133 aa).

Belongs to the RbfA family. In terms of assembly, monomer. Binds 30S ribosomal subunits, but not 50S ribosomal subunits or 70S ribosomes.

The protein resides in the cytoplasm. In terms of biological role, one of several proteins that assist in the late maturation steps of the functional core of the 30S ribosomal subunit. Associates with free 30S ribosomal subunits (but not with 30S subunits that are part of 70S ribosomes or polysomes). Required for efficient processing of 16S rRNA. May interact with the 5'-terminal helix region of 16S rRNA. The protein is Ribosome-binding factor A of Acinetobacter baumannii (strain ACICU).